A 202-amino-acid polypeptide reads, in one-letter code: Holliday junction branch migration complex subunit RuvA (202 aa).

The segment at 1–64 is domain I; that stretch reads MIGRLRGTLA…EDAQLLYGFA (64 aa). The interval 65–143 is domain II; the sequence is SKRERDFFRE…AWEAVPSMFA (79 aa). The interval 144-154 is flexible linker; it reads LVPNQPDAPAP. Residues 154 to 202 are domain III; sequence PVASAESDAVSALISLGYKPQEASKAVSAIKDKGLSSEDMIRRALKGMI.

The protein belongs to the RuvA family. Homotetramer. Forms an RuvA(8)-RuvB(12)-Holliday junction (HJ) complex. HJ DNA is sandwiched between 2 RuvA tetramers; dsDNA enters through RuvA and exits via RuvB. An RuvB hexamer assembles on each DNA strand where it exits the tetramer. Each RuvB hexamer is contacted by two RuvA subunits (via domain III) on 2 adjacent RuvB subunits; this complex drives branch migration. In the full resolvosome a probable DNA-RuvA(4)-RuvB(12)-RuvC(2) complex forms which resolves the HJ.

The protein localises to the cytoplasm. Functionally, the RuvA-RuvB-RuvC complex processes Holliday junction (HJ) DNA during genetic recombination and DNA repair, while the RuvA-RuvB complex plays an important role in the rescue of blocked DNA replication forks via replication fork reversal (RFR). RuvA specifically binds to HJ cruciform DNA, conferring on it an open structure. The RuvB hexamer acts as an ATP-dependent pump, pulling dsDNA into and through the RuvAB complex. HJ branch migration allows RuvC to scan DNA until it finds its consensus sequence, where it cleaves and resolves the cruciform DNA. This chain is Holliday junction branch migration complex subunit RuvA, found in Pseudomonas fluorescens (strain ATCC BAA-477 / NRRL B-23932 / Pf-5).